A 264-amino-acid polypeptide reads, in one-letter code: Chanoclavine-I dehydrogenase easD (264 aa).

Positions 1–20 are cleaved as a signal peptide; the sequence is MASVSSKIFAITGGASGIGA. Positions 18, 66, 132, 169, 173, and 204 each coordinate NADP(+). Tyr-169 acts as the Proton donor in catalysis. Lys-173 acts as the Lowers pKa of active site Tyr in catalysis.

It belongs to the short-chain dehydrogenases/reductases (SDR) family. As to quaternary structure, homotetramer.

The catalysed reaction is chanoclavine-I + NAD(+) = chanoclavine-I aldehyde + NADH + H(+). The protein operates within alkaloid biosynthesis; ergot alkaloid biosynthesis. Its function is as follows. Chanoclavine-I dehydrogenase; part of the gene cluster that mediates the biosynthesis of fungal ergot alkaloid. DmaW catalyzes the first step of ergot alkaloid biosynthesis by condensing dimethylallyl diphosphate (DMAP) and tryptophan to form 4-dimethylallyl-L-tryptophan. The second step is catalyzed by the methyltransferase easF that methylates 4-dimethylallyl-L-tryptophan in the presence of S-adenosyl-L-methionine, resulting in the formation of 4-dimethylallyl-L-abrine. The catalase easC and the FAD-dependent oxidoreductase easE then transform 4-dimethylallyl-L-abrine to chanoclavine-I which is further oxidized by easD in the presence of NAD(+), resulting in the formation of chanoclavine-I aldehyde. Chanoclavine-I aldehyde is the precursor of ergoamides and ergopeptines in Clavicipitaceae, and clavine-type alcaloids such as fumiclavine in Trichocomaceae. However, the metabolites downstream of chanoclavine-I aldehyde in Arthrodermataceae have not been identified yet. The polypeptide is Chanoclavine-I dehydrogenase easD (Arthroderma otae (strain ATCC MYA-4605 / CBS 113480) (Microsporum canis)).